Consider the following 495-residue polypeptide: Trigger factor (495 aa).

In terms of domain architecture, PPIase FKBP-type spans 169–254 (GDRVAMDYVG…VKDVAAPGAV (86 aa)). Residues 441 to 495 (LAEDEGEAKAETKKAAPKKKAAAKTEAAEAGEGEEAAAPKKKAAPKKKAADESAE) are disordered.

Belongs to the FKBP-type PPIase family. Tig subfamily.

It is found in the cytoplasm. The enzyme catalyses [protein]-peptidylproline (omega=180) = [protein]-peptidylproline (omega=0). In terms of biological role, involved in protein export. Acts as a chaperone by maintaining the newly synthesized protein in an open conformation. Functions as a peptidyl-prolyl cis-trans isomerase. The sequence is that of Trigger factor from Rhizobium etli (strain CIAT 652).